The following is a 502-amino-acid chain: Neuronal acetylcholine receptor subunit alpha-7 (502 aa).

The signal sequence occupies residues 1–22 (MCGRRGGIWLALAAALLHVSLQ). The Extracellular portion of the chain corresponds to 23-233 (GEFQRRLYKE…VTMRRRTLYY (211 aa)). Ca(2+) is bound by residues arginine 42 and valine 44. N-linked (GlcNAc...) asparagine glycans are attached at residues asparagine 46, asparagine 90, and asparagine 133. A disulfide bridge links cysteine 150 with cysteine 164. Residues serine 172 and tyrosine 210 each coordinate Ca(2+). A disulfide bridge connects residues cysteine 212 and cysteine 213. Helical transmembrane passes span 234 to 254 (GLNL…VFLL), 262 to 282 (ISLG…VAEI), and 295 to 315 (QYFA…VIVL). Positions 260–267 (EKISLGIT) are essential for TMEM35A/NACHO-mediated proper subunit assembly and trafficking to cell membrane. Residues 316-469 (RYHHHDPDGG…WKFAACVVDR (154 aa)) are Cytoplasmic-facing. The chain crosses the membrane as a helical span at residues 470 to 490 (LCLMAFSVFTIICTIGILMSA).

The protein belongs to the ligand-gated ion channel (TC 1.A.9) family. Acetylcholine receptor (TC 1.A.9.1) subfamily. Alpha-7/CHRNA7 sub-subfamily. In terms of assembly, homopentamer. Can also form heteropentamers with CHRNB2, mainly found in basal forebrain cholinergic neurons. Interacts with RIC3; which is required for proper folding and assembly. Interacts with LYPD6. Interacts with CANX. Glycosylations at Asn-46, Asn-90 and Asn-133 are essential for TMEM35A/NACHO-mediated proper subunit assembly and trafficking to the cell membrane. Higly expressed in brain. ALso expressed in immune cells sucha as macrophages.

It is found in the postsynaptic cell membrane. It localises to the cell membrane. It catalyses the reaction K(+)(in) = K(+)(out). It carries out the reaction Na(+)(in) = Na(+)(out). The enzyme catalyses Ca(2+)(in) = Ca(2+)(out). The catalysed reaction is choline(out) = choline(in). It catalyses the reaction NH4(+)(in) = NH4(+)(out). It carries out the reaction L-arginine(in) = L-arginine(out). The enzyme catalyses guanidine(out) = guanidine(in). Its activity is regulated as follows. Activated by a myriad of ligands such as acetylcholine, cytisine, nicotine, choline and epibatidine. Oligomeric amyloid-beta protein 42 activates specifially CHRNA7:CHRNB2 nAchRs. Activity is modulated by positive allosteric modulators (PAMs), such as flavonoids, with a wide range of chemical diversity, pharmacological sensitivity and efficacy. AChR activity is inhibited by the antagonists alpha-conotoxons RgIA, ImI and ImII, small disulfide-constrained peptides from cone snails. Component of neuronal acetylcholine receptors (nAChRs) that function as pentameric, ligand-gated cation channels with high calcium permeability among other activities. nAChRs are excitatory neurotrasnmitter receptors formed by a collection of nAChR subunits known to mediate synaptic transmission in the nervous system and the neuromuscular junction. Each nAchR subunit confers differential attributes to channel properties, including activation, deactivation and desensitization kinetics, pH sensitivity, cation permeability, and binding to allosteric modulators. CHRNA7 forms homopentameric neuronal acetylcholine receptors abundantly expressed in the central nervous system, characterized by fast desensitization and high calcium permeability. Also forms heteropentamers with CHRNB2, mainly expressed in basal forebrain cholinergic neurons. Involved in the modulation of calcium-dependent signaling pathways and influences the release of neurotransmitters, including dopamine, glutamate and GABA. Involved in the modulation of calcium-dependent signaling pathways and influences the release of neurotransmitters, including dopamine, glutamate and GABA. Also expressed in non-neuronal cells such as immune cells like lymphocytes, monocytes and macrophages. In T cells, activation induces metabotropic signaling that results in an increase of intracellular Ca2+ concentrations, independent of ionotropic receptor functions. In macrophages, required for acetylcholine-mediated inhibition of TNF and other inflammatory cytokine release. Once activated by acetylcholine, nicotine or other agonists, selectively inhibits production of pro-inflammatory cytokines while leaving anti-inflammatory cytokines undisturbed. Stimulates the cholinergic anti-inflammatory pathway, controlling inflammation by inhibiting NFKB nuclear translocation and activating the JAK2-STAT3 pathway, independently of ion channel activity. Also expressed in the urothelium where it modulates reflex bladder activity by increasing intracellular calcium through internal stores and decreasing basal ATP release. The sequence is that of Neuronal acetylcholine receptor subunit alpha-7 (Chrna7) from Mus musculus (Mouse).